The primary structure comprises 176 residues: NAD(P)H-quinone oxidoreductase subunit 6, chloroplastic (176 aa).

The next 5 membrane-spanning stretches (helical) occupy residues 10–30, 32–52, 61–81, 107–127, and 152–172; these read ILLV…VLLT, PIYS…FHIP, AQLL…VMFM, ILFS…IWTT, and FYLP…GAIA.

The protein belongs to the complex I subunit 6 family. As to quaternary structure, NDH is composed of at least 16 different subunits, 5 of which are encoded in the nucleus.

The protein resides in the plastid. Its subcellular location is the chloroplast thylakoid membrane. It catalyses the reaction a plastoquinone + NADH + (n+1) H(+)(in) = a plastoquinol + NAD(+) + n H(+)(out). The catalysed reaction is a plastoquinone + NADPH + (n+1) H(+)(in) = a plastoquinol + NADP(+) + n H(+)(out). NDH shuttles electrons from NAD(P)H:plastoquinone, via FMN and iron-sulfur (Fe-S) centers, to quinones in the photosynthetic chain and possibly in a chloroplast respiratory chain. The immediate electron acceptor for the enzyme in this species is believed to be plastoquinone. Couples the redox reaction to proton translocation, and thus conserves the redox energy in a proton gradient. The sequence is that of NAD(P)H-quinone oxidoreductase subunit 6, chloroplastic (ndhG) from Calycanthus floridus var. glaucus (Eastern sweetshrub).